A 330-amino-acid chain; its full sequence is MKISVLGAGSWGTAIAIHLNRLGHQITLWLRDKNQFEEIVSTRHNKKYLDVDIPQEISITTDLKEAVTNSEIVVIAVPSHAVREISEKLKEVADKNFIVVNLAKGIETSTLKRMSEVIKEYLSNDVVVLSGPSHAEEVVRQIPTACVLASLNVKACEVVQDAFMDENFRLYINKDVVGVELGGSLKNIIALGAGISDGLGFGDNTKAALMTRGLAEITRLGVALGSDPLTFLGLAGVGDLIVTCTSMLSRNRRAGILIGKGKSLEEALKEIGMVVEGVNTTKSAYRLSQIHKIEMPITKEIYSILFEGKNPYEAVYSLMTRDKKHELHGI.

Serine 10, tryptophan 11, arginine 31, and lysine 104 together coordinate NADPH. Residues lysine 104, glycine 131, and serine 133 each contribute to the sn-glycerol 3-phosphate site. Alanine 135 is an NADPH binding site. Sn-glycerol 3-phosphate is bound by residues lysine 186, aspartate 239, serine 249, arginine 250, and asparagine 251. Lysine 186 functions as the Proton acceptor in the catalytic mechanism. An NADPH-binding site is contributed by arginine 250. Valine 274 and glutamate 276 together coordinate NADPH.

It belongs to the NAD-dependent glycerol-3-phosphate dehydrogenase family.

It localises to the cytoplasm. It catalyses the reaction sn-glycerol 3-phosphate + NAD(+) = dihydroxyacetone phosphate + NADH + H(+). The enzyme catalyses sn-glycerol 3-phosphate + NADP(+) = dihydroxyacetone phosphate + NADPH + H(+). Its pathway is membrane lipid metabolism; glycerophospholipid metabolism. Functionally, catalyzes the reduction of the glycolytic intermediate dihydroxyacetone phosphate (DHAP) to sn-glycerol 3-phosphate (G3P), the key precursor for phospholipid synthesis. This Thermoanaerobacter sp. (strain X514) protein is Glycerol-3-phosphate dehydrogenase [NAD(P)+].